The sequence spans 318 residues: Phospho-N-acetylmuramoyl-pentapeptide-transferase (318 aa).

10 helical membrane passes run 5–25 (LKPL…VLAF), 50–70 (PTMG…VLAP), 71–91 (PSPL…IGLV), 115–135 (VLLG…GSVI), 139–159 (VTGW…LLLV), 173–193 (GLAA…ALTL), 198–218 (LVTF…YNFH), 222–242 (VFMG…LAIM), 248–268 (VLPV…LQVV), and 298–318 (VLFF…LLTI).

This sequence belongs to the glycosyltransferase 4 family. MraY subfamily. The cofactor is Mg(2+).

Its subcellular location is the cell membrane. The catalysed reaction is UDP-N-acetyl-alpha-D-muramoyl-L-alanyl-gamma-D-glutamyl-meso-2,6-diaminopimeloyl-D-alanyl-D-alanine + di-trans,octa-cis-undecaprenyl phosphate = di-trans,octa-cis-undecaprenyl diphospho-N-acetyl-alpha-D-muramoyl-L-alanyl-D-glutamyl-meso-2,6-diaminopimeloyl-D-alanyl-D-alanine + UMP. It participates in cell wall biogenesis; peptidoglycan biosynthesis. In terms of biological role, catalyzes the initial step of the lipid cycle reactions in the biosynthesis of the cell wall peptidoglycan: transfers peptidoglycan precursor phospho-MurNAc-pentapeptide from UDP-MurNAc-pentapeptide onto the lipid carrier undecaprenyl phosphate, yielding undecaprenyl-pyrophosphoryl-MurNAc-pentapeptide, known as lipid I. This Moorella thermoacetica (strain ATCC 39073 / JCM 9320) protein is Phospho-N-acetylmuramoyl-pentapeptide-transferase.